Here is a 96-residue protein sequence, read N- to C-terminus: Large ribosomal subunit protein uL23 (96 aa).

The protein belongs to the universal ribosomal protein uL23 family. Part of the 50S ribosomal subunit. Contacts protein L29, and trigger factor when it is bound to the ribosome.

Its function is as follows. One of the early assembly proteins it binds 23S rRNA. One of the proteins that surrounds the polypeptide exit tunnel on the outside of the ribosome. Forms the main docking site for trigger factor binding to the ribosome. This is Large ribosomal subunit protein uL23 from Bacillus mycoides (strain KBAB4) (Bacillus weihenstephanensis).